A 517-amino-acid chain; its full sequence is TBC1 domain family member 22A (517 aa).

Alanine 2 is modified (N-acetylalanine). The disordered stretch occupies residues 103–191 (RNHSQRQGRP…PSTLSSSALS (89 aa)). Serine 132, serine 145, and serine 167 each carry phosphoserine. Residues 163–174 (QRSQSLPHSATV) show a composition bias toward polar residues. A compositionally biased stretch (low complexity) spans 176–190 (LGGTSDPSTLSSSAL). One can recognise a Rab-GAP TBC domain in the interval 222–446 (GIPKPVRPMT…RLWDTYQSEP (225 aa)).

As to quaternary structure, homodimer. Interacts with ACBD3 and ARFGEF1. Interacts with YWHAB, YWHAE, YWHAG, YWHAH, YWHAQ and YWHAZ.

Functionally, may act as a GTPase-activating protein for Rab family protein(s). The polypeptide is TBC1 domain family member 22A (TBC1D22A) (Homo sapiens (Human)).